Here is a 284-residue protein sequence, read N- to C-terminus: Phosphoribosylaminoimidazole-succinocarboxamide synthase (284 aa).

The protein belongs to the SAICAR synthetase family.

The enzyme catalyses 5-amino-1-(5-phospho-D-ribosyl)imidazole-4-carboxylate + L-aspartate + ATP = (2S)-2-[5-amino-1-(5-phospho-beta-D-ribosyl)imidazole-4-carboxamido]succinate + ADP + phosphate + 2 H(+). It functions in the pathway purine metabolism; IMP biosynthesis via de novo pathway; 5-amino-1-(5-phospho-D-ribosyl)imidazole-4-carboxamide from 5-amino-1-(5-phospho-D-ribosyl)imidazole-4-carboxylate: step 1/2. The protein is Phosphoribosylaminoimidazole-succinocarboxamide synthase of Chromobacterium violaceum (strain ATCC 12472 / DSM 30191 / JCM 1249 / CCUG 213 / NBRC 12614 / NCIMB 9131 / NCTC 9757 / MK).